A 224-amino-acid polypeptide reads, in one-letter code: Synaptogyrin-2 (224 aa).

Position 1 is an N-acetylmethionine (M1). Position 3 is a phosphoserine (S3). The region spanning 20 to 171 is the MARVEL domain; the sequence is FLTQPQVVAR…LASLAYQRYK (152 aa). 4 consecutive transmembrane segments (helical) span residues 26-46, 73-93, 105-125, and 147-167; these read VVAR…IYGE, AIGV…AYFP, VIGD…GFCF, and AAIT…SLAY.

This sequence belongs to the synaptogyrin family. (Microbial infection) Interacts with SFTS phlebovirus protein NSs; may be involved in virus replication. In terms of processing, may be tyrosine phosphorylated by Src. As to expression, ubiquitous; low expression in brain.

The protein resides in the cytoplasmic vesicle membrane. It localises to the cytoplasmic vesicle. Its subcellular location is the secretory vesicle. It is found in the synaptic vesicle membrane. The protein localises to the lipid droplet. Functionally, may play a role in regulated exocytosis. In neuronal cells, modulates the localization of synaptophysin/SYP into synaptic-like microvesicles and may therefore play a role in the formation and/or the maturation of this vesicles. May also play a role in GLUT4 storage and transport to the plasma membrane. Its function is as follows. (Microbial infection) May play a role in the assembly of cytoplasmic inclusion bodies required for SFTS phlebovirus replication. This chain is Synaptogyrin-2, found in Homo sapiens (Human).